Reading from the N-terminus, the 360-residue chain is Ribosomal RNA large subunit methyltransferase M (360 aa).

Residues S190, 223-226 (CPGG), D242, D262, and D280 contribute to the S-adenosyl-L-methionine site. The active-site Proton acceptor is K309.

This sequence belongs to the class I-like SAM-binding methyltransferase superfamily. RNA methyltransferase RlmE family. RlmM subfamily. As to quaternary structure, monomer.

The protein resides in the cytoplasm. It catalyses the reaction cytidine(2498) in 23S rRNA + S-adenosyl-L-methionine = 2'-O-methylcytidine(2498) in 23S rRNA + S-adenosyl-L-homocysteine + H(+). Functionally, catalyzes the 2'-O-methylation at nucleotide C2498 in 23S rRNA. The polypeptide is Ribosomal RNA large subunit methyltransferase M (Haemophilus ducreyi (strain 35000HP / ATCC 700724)).